The sequence spans 606 residues: Aspartate--tRNA(Asp/Asn) ligase (606 aa).

Position 177 (Glu177) interacts with L-aspartate. The tract at residues 201 to 204 is aspartate; the sequence is QLFK. Arg223 is a binding site for L-aspartate. ATP-binding positions include 223 to 225 and Gln232; that span reads RDE. His461 serves as a coordination point for L-aspartate. ATP is bound at residue Glu499. Arg506 serves as a coordination point for L-aspartate. 551-554 is an ATP binding site; the sequence is GLDR.

The protein belongs to the class-II aminoacyl-tRNA synthetase family. Type 1 subfamily. As to quaternary structure, homodimer.

It is found in the cytoplasm. The enzyme catalyses tRNA(Asx) + L-aspartate + ATP = L-aspartyl-tRNA(Asx) + AMP + diphosphate. In terms of biological role, aspartyl-tRNA synthetase with relaxed tRNA specificity since it is able to aspartylate not only its cognate tRNA(Asp) but also tRNA(Asn). Reaction proceeds in two steps: L-aspartate is first activated by ATP to form Asp-AMP and then transferred to the acceptor end of tRNA(Asp/Asn). In Prochlorococcus marinus (strain NATL2A), this protein is Aspartate--tRNA(Asp/Asn) ligase.